Reading from the N-terminus, the 753-residue chain is MSRQSTDTAVSSQRLLASAIGVAITAIAAPQAAQADEAGQKKTDKDRVLSLDAATIVGEQQDETTYNVDRSASKKYTAPLLDTPKTVTVIPQQVIKDTGALTLADALRTTPGITFGAGEGGNPAGDRPFIRGFNAESDTFLDGMRDVASQTREVFNVEQIEVSKGPGSAYTGAGSTGGSLNLISKTAKQDNFTDAGFTWGSDQTRRTTLDVNRMIGDNAAFRLNLMKHDAHVAGRDEVSVSRWGVAPTVTFGFDTPTRATLSYYHLSTDDMPDYGLPLTNVNRSKANPSKPASVDRDNFYGLKDRDYRKSTTDSGTFRIEHDLNDNLTLSNSTRLVRTTLDYIVSNPDDSRGNVANGYVYRSAKSRNSTSKGWVNQTDLKANFETGFIKHTLVTGLEFSYEDVHNRPYAITSGGGAGNTCNARLLASGDCTSLNRPTPGDNWTGSITDGLAYTDTDTKTSAAYVFDTLKLSEQWELNLGLRYDDFDTKSSGYQTAGRNGPAGYFKRENNSHFWNYQTGLVYKPAPNGSIYLAWSTSSNPTGETGGEGQADISVGNNGLDPERNRNLELGTKWAFFDDALSLNAALFRTDKTNARVASPDVSTLQVLDGEQRVQGVELGFNGKLTEKWKVFGGYTYLDSEIRKSTVKSDEGNKMPQTAQNNFTLWTTYDLLQNFTIGGGTTYVDKQYGNTANSTYIPSYWRYDAMASYKVSKNVDLQLNVQNLTDKRYFDQVYSTHMAHVAPGRTALLGVNFHF.

An N-terminal signal peptide occupies residues 1 to 35 (MSRQSTDTAVSSQRLLASAIGVAITAIAAPQAAQA). The region spanning 79 to 185 (PLLDTPKTVT…TGGSLNLISK (107 aa)) is the TBDR plug domain. In terms of domain architecture, TBDR beta-barrel spans 190 to 753 (DNFTDAGFTW…TALLGVNFHF (564 aa)). Cys-420 and Cys-430 are oxidised to a cystine.

It belongs to the TonB-dependent receptor family.

The protein localises to the cell outer membrane. Involved in the initial step of iron uptake by binding iron chelating siderophores, thereby allowing extraction of iron from the environment. Probably involved in the transport of siderophores, including host catecholamines such as dopamine. The polypeptide is Probable TonB-dependent siderophore receptor PiuA (Pseudomonas aeruginosa (strain ATCC 15692 / DSM 22644 / CIP 104116 / JCM 14847 / LMG 12228 / 1C / PRS 101 / PAO1)).